The sequence spans 201 residues: Recombination protein RecR (201 aa).

The C4-type zinc finger occupies 58–73; sequence CEQCASITDTCPCRIC. A Toprim domain is found at 81 to 178; sequence DKLCLVSEWD…ELSRLAQGIP (98 aa).

It belongs to the RecR family.

Functionally, may play a role in DNA repair. It seems to be involved in an RecBC-independent recombinational process of DNA repair. It may act with RecF and RecO. This chain is Recombination protein RecR, found in Maridesulfovibrio salexigens (strain ATCC 14822 / DSM 2638 / NCIMB 8403 / VKM B-1763) (Desulfovibrio salexigens).